A 244-amino-acid polypeptide reads, in one-letter code: Probable hydrolase R7 (244 aa).

The N-terminal stretch at 1–20 (MTKPFILLVPGSFAPETIYA) is a signal peptide. Residues aspartate 192 and histidine 224 each act as charge relay system in the active site. Asparagine 227 carries N-linked (GlcNAc...) asparagine glycosylation.

This sequence belongs to the AB hydrolase superfamily.

It functions in the pathway secondary metabolite biosynthesis. Probable hydrolase; part of the gene cluster that mediates the biosynthesis of squalestatin S1 (SQS1, also known as zaragozic acid A), a lead compound for the treatment of hyper-cholesterolemia by targeting squalene synthase (SS). Both phenylalanine and benzoic acid are known precursors of SQS1 and so it is unsurprising that the cluster also contains genes potentially involved in benzoate production such as phenyl-alanine ammonia lysase (PAL) M7, which catalyzes the first step in the degradation of phenylalanine, or the NADP-dependent dehydrogenase M3. The cluster contains two PKS encoding genes. The tetraketide synthase is responsible for the biosynthesis of the tetraketide sidechain of SQS1. The biosynthesis must involve 3 rounds of chain extension. After the first and second rounds methyl-transfer occurs, and in all rounds of extension the ketoreductase and dehydratase areactive. The enoyl reductase and C-MeT are not active in the final round of extension. The other PKS is therefore likely to encode squalestatin hexaketide synthase (SQHKS). The hexaketide main chain is initiated by benzoate which is an unusual starter unit for a highly reducing polyketide synthase. The cluster also contains a gene encoding a citrate synthase-like protein R3 presumably involved in linking the hexaketide to the oxaloacetate moiety. Formation of the tetraketide CoA may be catalyzed by the M9 CoA ligase, but the mechanism of release of the tetraketide and the hexaketide from their respective PKS remains unknown, although the cluster encodes a potential esterase (M8) and a possible hydrolase (M10) which could be involved in these processes. Two acyltransferases (AT), M4 and R4, are also encoded in the cluster. M4 is responsible for loading of the tetraketide sidechain from CoA onto the squalestatin core as the final step of biosynthesis. M4 appears to have a broad substrate selectivity for its acyl CoA substrate, allowing the in vitro synthesis of novel squalestatins. The biosynthesis of SQS1 requires several oxidative steps likely performed by oxidoreductases M1, R1 and R2. Finally, in support of the identification of the cluster as being responsible for SQS1 production, the cluster contains a gene encoding a putative squalene synthase (SS) R6, suggesting a likely mechanism for self-resistance. This is Probable hydrolase R7 from Phoma sp. (strain ATCC 20986 / MF5453).